A 469-amino-acid polypeptide reads, in one-letter code: Hydrogen cyanide synthase subunit HcnB (469 aa).

In terms of assembly, heterotrimer of HcnA, HcnB and HcnC.

It localises to the cell membrane. It carries out the reaction glycine + 2 A = hydrogen cyanide + 2 AH2 + CO2. In terms of biological role, a three-component membrane-bound flavoenzyme that catalyzes the formation of hydrogen cyanide, a secondary metabolite, by transfer of electrons to a cyanide-resistant branch of the aerobic respiratory chain. Contributes to suppression of black root rot of tobacco. The chain is Hydrogen cyanide synthase subunit HcnB from Pseudomonas protegens (strain DSM 19095 / LMG 27888 / CFBP 6595 / CHA0).